A 394-amino-acid chain; its full sequence is Phosphoglycerate kinase (394 aa).

Residues 21-23 (DLN), Arg36, 59-62 (HLGR), Arg113, and Arg146 contribute to the substrate site. ATP-binding positions include Lys197, Glu319, and 345 to 348 (GGDT).

Belongs to the phosphoglycerate kinase family. In terms of assembly, monomer.

Its subcellular location is the cytoplasm. It carries out the reaction (2R)-3-phosphoglycerate + ATP = (2R)-3-phospho-glyceroyl phosphate + ADP. It participates in carbohydrate degradation; glycolysis; pyruvate from D-glyceraldehyde 3-phosphate: step 2/5. In Halorhodospira halophila (strain DSM 244 / SL1) (Ectothiorhodospira halophila (strain DSM 244 / SL1)), this protein is Phosphoglycerate kinase.